The sequence spans 336 residues: Ferrochelatase (336 aa).

His-206 and Glu-287 together coordinate Fe cation.

It belongs to the ferrochelatase family.

It localises to the cytoplasm. The catalysed reaction is heme b + 2 H(+) = protoporphyrin IX + Fe(2+). It participates in porphyrin-containing compound metabolism; protoheme biosynthesis; protoheme from protoporphyrin-IX: step 1/1. In terms of biological role, catalyzes the ferrous insertion into protoporphyrin IX. The sequence is that of Ferrochelatase from Neisseria meningitidis serogroup C / serotype 2a (strain ATCC 700532 / DSM 15464 / FAM18).